A 136-amino-acid chain; its full sequence is SPbeta prophage-derived uncharacterized protein YonI (136 aa).

This is SPbeta prophage-derived uncharacterized protein YonI (yonI) from Bacillus subtilis (strain 168).